The sequence spans 577 residues: Double-stranded RNA-binding protein Staufen homolog 1 (577 aa).

Residue serine 2 is modified to N-acetylserine. Over residues 34-44 (SIPSTTSSLPS) the composition is skewed to polar residues. A disordered region spans residues 34 to 55 (SIPSTTSSLPSENAGRPIQNSA). The region spanning 72-162 (TPTVELNALC…AAKALRILQN (91 aa)) is the DRBM 1 domain. An Asymmetric dimethylarginine modification is found at arginine 108. Arginine 115 carries the asymmetric dimethylarginine; alternate modification. Position 115 is an omega-N-methylarginine; alternate (arginine 115). Phosphoserine is present on serine 176. One can recognise a DRBM 2 domain in the interval 184 to 251 (SEISQVFEIA…AIAVLEELKK (68 aa)). Serine 278 carries the phosphoserine modification. Residues 286–354 (NPISRLAQIQ…AENMLEILGF (69 aa)) form the DRBM 3 domain. The disordered stretch occupies residues 360 to 397 (QPTKPALKSEEKTPIKKPGDGRKVTFFEPGSGDENGTS). The span at 366–384 (LKSEEKTPIKKPGDGRKVT) shows a compositional bias: basic and acidic residues. The residue at position 390 (serine 390) is a Phosphoserine.

As to quaternary structure, binds tubulin. Binds with low affinity single-stranded RNA or DNA homopolymers. Interacts with CASC3 in an RNA-dependent manner. Identified in a mRNP complex, at least composed of DHX9, DDX3X, ELAVL1, HNRNPU, IGF2BP1, ILF3, PABPC1, PCBP2, PTBP2, STAU1, STAU2, SYNCRIP and YBX1. In terms of assembly, (Microbial infection) Interacts with HERV-K rec and gag proteins. (Microbial infection) Interacts with HIV-1 GAG polyprotein. As to quaternary structure, (Microbial infection) Interacts with influenza virus NS1 protein. In terms of assembly, (Microbial infection) Interacts with Ebola virus NP, VP30 and VP35. Widely expressed. Expressed in brain, pancreas, heart, skeletal muscles, liver, lung, kidney and placenta.

Its subcellular location is the cytoplasm. The protein resides in the rough endoplasmic reticulum. Binds double-stranded RNA (regardless of the sequence) and tubulin. May play a role in specific positioning of mRNAs at given sites in the cell by cross-linking cytoskeletal and RNA components, and in stimulating their translation at the site. Its function is as follows. (Microbial infection) Plays a role in virus particles production of many viruses including of HIV-1, HERV-K, ebola virus and influenza virus. Acts by interacting with various viral proteins involved in particle budding process. The chain is Double-stranded RNA-binding protein Staufen homolog 1 (STAU1) from Homo sapiens (Human).